Reading from the N-terminus, the 151-residue chain is D-aminoacyl-tRNA deacylase (151 aa).

Residues 136–137 (GP) carry the Gly-cisPro motif, important for rejection of L-amino acids motif.

This sequence belongs to the DTD family. In terms of assembly, homodimer.

Its subcellular location is the cytoplasm. The enzyme catalyses glycyl-tRNA(Ala) + H2O = tRNA(Ala) + glycine + H(+). It catalyses the reaction a D-aminoacyl-tRNA + H2O = a tRNA + a D-alpha-amino acid + H(+). Its function is as follows. An aminoacyl-tRNA editing enzyme that deacylates mischarged D-aminoacyl-tRNAs. Also deacylates mischarged glycyl-tRNA(Ala), protecting cells against glycine mischarging by AlaRS. Acts via tRNA-based rather than protein-based catalysis; rejects L-amino acids rather than detecting D-amino acids in the active site. By recycling D-aminoacyl-tRNA to D-amino acids and free tRNA molecules, this enzyme counteracts the toxicity associated with the formation of D-aminoacyl-tRNA entities in vivo and helps enforce protein L-homochirality. This chain is D-aminoacyl-tRNA deacylase, found in Lactococcus lactis subsp. cremoris (strain MG1363).